Here is a 319-residue protein sequence, read N- to C-terminus: Protein-methionine methyltransferase laeA (319 aa).

Positions 269–293 (REPQSGTCSVQRENGANGDRSTLSA) are disordered. Positions 270-293 (EPQSGTCSVQRENGANGDRSTLSA) are enriched in polar residues.

It belongs to the methyltransferase superfamily. LaeA methyltransferase family. In terms of assembly, component of the heterotrimeric velvet complex composed of laeA, veA and velB; VeA acting as a bridging protein between laeA and velB.

Its subcellular location is the nucleus. It carries out the reaction L-methionyl-[protein] + S-adenosyl-L-methionine = S-methyl-L-methionyl-[protein] + S-adenosyl-L-homocysteine. In terms of biological role, methyltransferase; component of the velvet transcription factor complex that acts as a global regulator for secondary metabolite gene expression. Controls the expression of the chaetoglobosin A biosynthesis cluster via the cheR transcription factor and the subsequent production of chaetoglobosin A. Positively regulates the expression of smtA and negatively regulates the expression of velB. LaeA also regulates pigmentation and spores production. This chain is Protein-methionine methyltransferase laeA, found in Chaetomium globosum (strain ATCC 6205 / CBS 148.51 / DSM 1962 / NBRC 6347 / NRRL 1970) (Soil fungus).